The chain runs to 241 residues: MSFSRPSGRTADQLRPVRIERAFTRHAEGSVLVSFGDTRVLCTASVENRVPNFLRGKGEGWVTAEYGMLPRSTHTRSDREAARGKQGGRTLEIQRLIGRALRACVDRNALGERTITLDCDVLQADGGTRTAAITGAYVALADAVNLLLKRGDIKKHPLIGAVAAVSVGIYRGEPVLDLDYPEDSDCDTDMNVVMNDGGGFIELQGTAEGHAFRRDELNALLALAEKGVGELFELQRAALAG.

Residues Arg-89 and 127–129 (GTR) contribute to the phosphate site.

The protein belongs to the RNase PH family. Homohexameric ring arranged as a trimer of dimers.

The catalysed reaction is tRNA(n+1) + phosphate = tRNA(n) + a ribonucleoside 5'-diphosphate. Its function is as follows. Phosphorolytic 3'-5' exoribonuclease that plays an important role in tRNA 3'-end maturation. Removes nucleotide residues following the 3'-CCA terminus of tRNAs; can also add nucleotides to the ends of RNA molecules by using nucleoside diphosphates as substrates, but this may not be physiologically important. Probably plays a role in initiation of 16S rRNA degradation (leading to ribosome degradation) during starvation. The protein is Ribonuclease PH of Xanthomonas campestris pv. campestris (strain 8004).